A 232-amino-acid polypeptide reads, in one-letter code: MKTLVVCSGGLDSVSLAYRIASEHQLTALLSFDYGQRHKKELDSAKACAERLGVPHQIIDITNIGASLTGSALTDDIDVPDGHYAEETMKITVVPNRNAIMLAIAFGVAAAQKAEAIALAVHGGDHFIYPDCRPGFIDAFQTMQNHALDGYADIKLLAPYVHASKADIVIDGAKHGAPFAATWSCYKGGEHHCGRCGTCVERREAFHLAGVEDPTLYEDADFWRSAIEKRNA.

ATP is bound at residue 7–17; that stretch reads CSGGLDSVSLA. Residues cysteine 185, cysteine 193, cysteine 196, and cysteine 199 each contribute to the Zn(2+) site.

This sequence belongs to the QueC family. Zn(2+) serves as cofactor.

It carries out the reaction 7-carboxy-7-deazaguanine + NH4(+) + ATP = 7-cyano-7-deazaguanine + ADP + phosphate + H2O + H(+). The protein operates within purine metabolism; 7-cyano-7-deazaguanine biosynthesis. Functionally, catalyzes the ATP-dependent conversion of 7-carboxy-7-deazaguanine (CDG) to 7-cyano-7-deazaguanine (preQ(0)). The protein is 7-cyano-7-deazaguanine synthase of Brucella anthropi (strain ATCC 49188 / DSM 6882 / CCUG 24695 / JCM 21032 / LMG 3331 / NBRC 15819 / NCTC 12168 / Alc 37) (Ochrobactrum anthropi).